The sequence spans 264 residues: MKKELLKILREKKPLVHHITNIVTVNDCANITLAIGALPVMAHALEEVEEMVSAADALVLNIGTLTNEQVEAMIKAGKAANRLKVPVILDPVGAGATKLRTQSSKKILEEVKISVIKGNSAEISILAGKGGKIRGVESQSGADDISEAAKDLANAYNVVVAVSGVTDIITDGKRIAYVKNGHPMMGTVTGTGCMLTSVVASFCGVCEDYFAATVEAFVAFGIAGERAAQSSNVKGPGSFKVTFFDEIYNLTPEIIEKDKKVEYE.

Residue Met41 coordinates substrate. Lys117 and Ser163 together coordinate ATP. Residue Gly190 coordinates substrate.

It belongs to the Thz kinase family. It depends on Mg(2+) as a cofactor.

It carries out the reaction 5-(2-hydroxyethyl)-4-methylthiazole + ATP = 4-methyl-5-(2-phosphooxyethyl)-thiazole + ADP + H(+). The protein operates within cofactor biosynthesis; thiamine diphosphate biosynthesis; 4-methyl-5-(2-phosphoethyl)-thiazole from 5-(2-hydroxyethyl)-4-methylthiazole: step 1/1. In terms of biological role, catalyzes the phosphorylation of the hydroxyl group of 4-methyl-5-beta-hydroxyethylthiazole (THZ). This Thermoanaerobacter pseudethanolicus (strain ATCC 33223 / 39E) (Clostridium thermohydrosulfuricum) protein is Hydroxyethylthiazole kinase.